Consider the following 299-residue polypeptide: ATP phosphoribosyltransferase (299 aa).

The protein belongs to the ATP phosphoribosyltransferase family. Long subfamily. It depends on Mg(2+) as a cofactor.

Its subcellular location is the cytoplasm. The enzyme catalyses 1-(5-phospho-beta-D-ribosyl)-ATP + diphosphate = 5-phospho-alpha-D-ribose 1-diphosphate + ATP. Its pathway is amino-acid biosynthesis; L-histidine biosynthesis; L-histidine from 5-phospho-alpha-D-ribose 1-diphosphate: step 1/9. Feedback inhibited by histidine. In terms of biological role, catalyzes the condensation of ATP and 5-phosphoribose 1-diphosphate to form N'-(5'-phosphoribosyl)-ATP (PR-ATP). Has a crucial role in the pathway because the rate of histidine biosynthesis seems to be controlled primarily by regulation of HisG enzymatic activity. This Shewanella piezotolerans (strain WP3 / JCM 13877) protein is ATP phosphoribosyltransferase.